The following is a 167-amino-acid chain: Thioredoxin M-type, chloroplastic (167 aa).

The N-terminal 53 residues, 1-53 (MAMETCFRAWALHAPAGSKDRLLVGNLVLPSKRALAPLSVGRVATRRPRHVCQ), are a transit peptide targeting the chloroplast. In terms of domain architecture, Thioredoxin spans 54–165 (SKNAVDEVVV…LTTLIDKYIG (112 aa)). An intrachain disulfide couples Cys89 to Cys92.

This sequence belongs to the thioredoxin family. Plant M-type subfamily. Forms a complex with heterodimeric ferredoxin-thioredoxin reductase (FTR) and ferredoxin.

The protein localises to the plastid. It localises to the chloroplast. Participates in various redox reactions through the reversible oxidation of the active center dithiol to a disulfide. The M form is known to activate NADP-malate dehydrogenase. This chain is Thioredoxin M-type, chloroplastic (TRM1), found in Zea mays (Maize).